A 356-amino-acid chain; its full sequence is Histidinol-phosphate aminotransferase (356 aa).

K214 is subject to N6-(pyridoxal phosphate)lysine.

The protein belongs to the class-II pyridoxal-phosphate-dependent aminotransferase family. Histidinol-phosphate aminotransferase subfamily. Homodimer. The cofactor is pyridoxal 5'-phosphate.

The catalysed reaction is L-histidinol phosphate + 2-oxoglutarate = 3-(imidazol-4-yl)-2-oxopropyl phosphate + L-glutamate. The protein operates within amino-acid biosynthesis; L-histidine biosynthesis; L-histidine from 5-phospho-alpha-D-ribose 1-diphosphate: step 7/9. In Escherichia coli O9:H4 (strain HS), this protein is Histidinol-phosphate aminotransferase.